Here is a 434-residue protein sequence, read N- to C-terminus: Beta-enolase (434 aa).

Ala2 carries the N-acetylalanine modification. Thr72 is modified (phosphothreonine). Phosphoserine is present on residues Ser83 and Ser157. Positions 158 and 167 each coordinate substrate. Position 176 is a phosphoserine (Ser176). The residue at position 205 (Thr205) is a Phosphothreonine. The active-site Proton donor is the Glu210. Thr229 carries the post-translational modification Phosphothreonine. Phosphotyrosine is present on Tyr236. Position 245 (Asp245) interacts with Mg(2+). Position 263 is a phosphoserine (Ser263). Substrate is bound by residues Glu293 and Asp318. Mg(2+) is bound by residues Glu293 and Asp318. Catalysis depends on Lys343, which acts as the Proton acceptor. Residues 370-373 and Lys394 each bind substrate; that span reads SHRS.

It belongs to the enolase family. In terms of assembly, mammalian enolase is composed of 3 isozyme subunits, alpha, beta and gamma, which can form homodimers or heterodimers which are cell-type and development-specific. Interacts with PNKD. The cofactor is Mg(2+).

The protein resides in the cytoplasm. The enzyme catalyses (2R)-2-phosphoglycerate = phosphoenolpyruvate + H2O. Its pathway is carbohydrate degradation; glycolysis; pyruvate from D-glyceraldehyde 3-phosphate: step 4/5. In terms of biological role, glycolytic enzyme that catalyzes the conversion of 2-phosphoglycerate to phosphoenolpyruvate. Appears to have a function in striated muscle development and regeneration. This is Beta-enolase (ENO3) from Bos taurus (Bovine).